A 485-amino-acid chain; its full sequence is Membrane-bound lytic murein transglycosylase F (485 aa).

Positions 1–29 are cleaved as a signal peptide; that stretch reads MFAHTALRQRCAKWLLATGLFLLLGACVE. Residues 30–267 form a non-LT domain region; it reads KPSTLERVKE…RLKDRYYGHV (238 aa). Positions 268–485 are LT domain; it reads DVLGYVGAYT…DKPADKSSPM (218 aa). Residue E314 is part of the active site. A disordered region spans residues 465-485; the sequence is EGNLHVPGVNKDKPADKSSPM. A compositionally biased stretch (basic and acidic residues) spans 474 to 485; that stretch reads NKDKPADKSSPM.

This sequence in the N-terminal section; belongs to the bacterial solute-binding protein 3 family. In the C-terminal section; belongs to the transglycosylase Slt family.

The protein resides in the cell outer membrane. It carries out the reaction Exolytic cleavage of the (1-&gt;4)-beta-glycosidic linkage between N-acetylmuramic acid (MurNAc) and N-acetylglucosamine (GlcNAc) residues in peptidoglycan, from either the reducing or the non-reducing ends of the peptidoglycan chains, with concomitant formation of a 1,6-anhydrobond in the MurNAc residue.. Its function is as follows. Murein-degrading enzyme that degrades murein glycan strands and insoluble, high-molecular weight murein sacculi, with the concomitant formation of a 1,6-anhydromuramoyl product. Lytic transglycosylases (LTs) play an integral role in the metabolism of the peptidoglycan (PG) sacculus. Their lytic action creates space within the PG sacculus to allow for its expansion as well as for the insertion of various structures such as secretion systems and flagella. The protein is Membrane-bound lytic murein transglycosylase F of Pseudomonas putida (strain ATCC 47054 / DSM 6125 / CFBP 8728 / NCIMB 11950 / KT2440).